Consider the following 196-residue polypeptide: 3-isopropylmalate dehydratase small subunit (196 aa).

This sequence belongs to the LeuD family. LeuD type 1 subfamily. As to quaternary structure, heterodimer of LeuC and LeuD.

It carries out the reaction (2R,3S)-3-isopropylmalate = (2S)-2-isopropylmalate. The protein operates within amino-acid biosynthesis; L-leucine biosynthesis; L-leucine from 3-methyl-2-oxobutanoate: step 2/4. Catalyzes the isomerization between 2-isopropylmalate and 3-isopropylmalate, via the formation of 2-isopropylmaleate. The protein is 3-isopropylmalate dehydratase small subunit of Corynebacterium aurimucosum (strain ATCC 700975 / DSM 44827 / CIP 107346 / CN-1) (Corynebacterium nigricans).